Reading from the N-terminus, the 323-residue chain is 4-diphosphocytidyl-2-C-methyl-D-erythritol kinase (323 aa).

The active site involves lysine 25. 110-120 (PVAGGMAGGSA) lines the ATP pocket. Aspartate 152 is a catalytic residue.

Belongs to the GHMP kinase family. IspE subfamily.

It catalyses the reaction 4-CDP-2-C-methyl-D-erythritol + ATP = 4-CDP-2-C-methyl-D-erythritol 2-phosphate + ADP + H(+). The protein operates within isoprenoid biosynthesis; isopentenyl diphosphate biosynthesis via DXP pathway; isopentenyl diphosphate from 1-deoxy-D-xylulose 5-phosphate: step 3/6. Catalyzes the phosphorylation of the position 2 hydroxy group of 4-diphosphocytidyl-2C-methyl-D-erythritol. The sequence is that of 4-diphosphocytidyl-2-C-methyl-D-erythritol kinase from Mycobacterium leprae (strain Br4923).